The primary structure comprises 343 residues: Tetraacyldisaccharide 4'-kinase (343 aa).

Position 53-60 (53-60) interacts with ATP; it reads TCGGAGKT.

It belongs to the LpxK family.

It carries out the reaction a lipid A disaccharide + ATP = a lipid IVA + ADP + H(+). The protein operates within glycolipid biosynthesis; lipid IV(A) biosynthesis; lipid IV(A) from (3R)-3-hydroxytetradecanoyl-[acyl-carrier-protein] and UDP-N-acetyl-alpha-D-glucosamine: step 6/6. In terms of biological role, transfers the gamma-phosphate of ATP to the 4'-position of a tetraacyldisaccharide 1-phosphate intermediate (termed DS-1-P) to form tetraacyldisaccharide 1,4'-bis-phosphate (lipid IVA). The protein is Tetraacyldisaccharide 4'-kinase of Bartonella quintana (strain Toulouse) (Rochalimaea quintana).